The sequence spans 104 residues: Zinc-containing ferredoxin-2 (104 aa).

An N-terminal extension region spans residues 2 to 37; the sequence is GIDPNYRQNRQVVGEHEGHKIYGPVEPPGKLGIHGT. Positions 17, 20, and 35 each coordinate Zn(2+). 4Fe-4S ferredoxin-type domains are found at residues 38-66 and 75-104; these read IVGV…WFDT and KADP…VKPP. 2 residues coordinate [3Fe-4S] cluster: C46 and C52. A [4Fe-4S] cluster-binding site is contributed by C56. D77 lines the Zn(2+) pocket. 3 residues coordinate [4Fe-4S] cluster: C84, C87, and C90. Position 94 (C94) interacts with [3Fe-4S] cluster.

It depends on [3Fe-4S] cluster as a cofactor. Requires [4Fe-4S] cluster as cofactor. Zn(2+) serves as cofactor.

Ferredoxins are iron-sulfur proteins that transfer electrons in a wide variety of metabolic reactions. In Sulfurisphaera tokodaii (strain DSM 16993 / JCM 10545 / NBRC 100140 / 7) (Sulfolobus tokodaii), this protein is Zinc-containing ferredoxin-2 (zfx2).